The sequence spans 156 residues: Arginine repressor (156 aa).

Belongs to the ArgR family.

The protein localises to the cytoplasm. It functions in the pathway amino-acid biosynthesis; L-arginine biosynthesis [regulation]. Functionally, regulates arginine biosynthesis genes. The polypeptide is Arginine repressor (Escherichia fergusonii (strain ATCC 35469 / DSM 13698 / CCUG 18766 / IAM 14443 / JCM 21226 / LMG 7866 / NBRC 102419 / NCTC 12128 / CDC 0568-73)).